A 157-amino-acid polypeptide reads, in one-letter code: Glutaredoxin-2, mitochondrial (157 aa).

Residues 1 to 18 (MYWRRAALVGTRLIPVRS) constitute a mitochondrion transit peptide. Ser-20 bears the Phosphoserine mark. Residues 51–151 (VNQIQETISN…PLVHQCHLKN (101 aa)) form the Glutaredoxin domain. Cys-62 is a binding site for [2Fe-2S] cluster. Lys-68 lines the glutathione pocket. At Cys-71 the chain carries S-glutathionyl cysteine; alternate. Cys-71 and Cys-74 are joined by a disulfide. Residues Gln-103 and Val-115 each contribute to the glutathione site. Cys-147 provides a ligand contact to [2Fe-2S] cluster.

Belongs to the glutaredoxin family. In terms of assembly, monomer; active form. Homodimer; inactive form. The homodimer is probably linked by 1 2Fe-2S cluster.

It localises to the mitochondrion. With respect to regulation, the 2Fe-2S present in the homodimer leads to inactivation of the enzyme. The 2Fe-2S may serve as a redox sensor: the presence of one-electron oxidants or reductants leading to the loss of the 2Fe-2S cluster, subsequent monomerization and activation of the enzyme. Glutathione-dependent oxidoreductase that facilitates the maintenance of mitochondrial redox homeostasis upon induction of apoptosis by oxidative stress. Involved in response to hydrogen peroxide and regulation of apoptosis caused by oxidative stress. Acts as a very efficient catalyst of monothiol reactions because of its high affinity for protein glutathione-mixed disulfides. Can receive electrons not only from glutathione (GSH), but also from thioredoxin reductase supporting both monothiol and dithiol reactions. Efficiently catalyzes both glutathionylation and deglutathionylation of mitochondrial complex I, which in turn regulates the superoxide production by the complex. Overexpression decreases the susceptibility to apoptosis and prevents loss of cardiolipin and cytochrome c release. The polypeptide is Glutaredoxin-2, mitochondrial (GLRX2) (Bos taurus (Bovine)).